A 202-amino-acid chain; its full sequence is dTTP/UTP pyrophosphatase (202 aa).

Catalysis depends on D76, which acts as the Proton acceptor.

It belongs to the Maf family. YhdE subfamily. A divalent metal cation is required as a cofactor.

It is found in the cytoplasm. The enzyme catalyses dTTP + H2O = dTMP + diphosphate + H(+). The catalysed reaction is UTP + H2O = UMP + diphosphate + H(+). Its function is as follows. Nucleoside triphosphate pyrophosphatase that hydrolyzes dTTP and UTP. May have a dual role in cell division arrest and in preventing the incorporation of modified nucleotides into cellular nucleic acids. This Neisseria gonorrhoeae (strain ATCC 700825 / FA 1090) protein is dTTP/UTP pyrophosphatase.